A 461-amino-acid polypeptide reads, in one-letter code: GTPase Der (461 aa).

EngA-type G domains lie at 2 to 164 (QSII…NENF) and 197 to 369 (IKVG…ANFT). Residues 8 to 15 (GKPNVGKS), 55 to 59 (DSGGL), 116 to 119 (NKID), 203 to 210 (GRVNVGKS), 250 to 254 (DTAGI), and 314 to 317 (NKWD) each bind GTP. In terms of domain architecture, KH-like spans 370–454 (QKIPTAKLNA…PLIIVSRKKG (85 aa)).

It belongs to the TRAFAC class TrmE-Era-EngA-EngB-Septin-like GTPase superfamily. EngA (Der) GTPase family. Associates with the 50S ribosomal subunit.

In terms of biological role, GTPase that plays an essential role in the late steps of ribosome biogenesis. The polypeptide is GTPase Der (Campylobacter lari (strain RM2100 / D67 / ATCC BAA-1060)).